A 135-amino-acid polypeptide reads, in one-letter code: NADPH-dependent 7-cyano-7-deazaguanine reductase (135 aa).

Cysteine 48 serves as the catalytic Thioimide intermediate. Aspartate 55 (proton donor) is an active-site residue. Residues 70-72 (LEL) and 89-90 (HE) each bind substrate.

It belongs to the GTP cyclohydrolase I family. QueF type 1 subfamily.

It is found in the cytoplasm. It carries out the reaction 7-aminomethyl-7-carbaguanine + 2 NADP(+) = 7-cyano-7-deazaguanine + 2 NADPH + 3 H(+). It participates in tRNA modification; tRNA-queuosine biosynthesis. Functionally, catalyzes the NADPH-dependent reduction of 7-cyano-7-deazaguanine (preQ0) to 7-aminomethyl-7-deazaguanine (preQ1). The sequence is that of NADPH-dependent 7-cyano-7-deazaguanine reductase from Prochlorococcus marinus (strain SARG / CCMP1375 / SS120).